Reading from the N-terminus, the 328-residue chain is Nickel import system permease protein NikB (328 aa).

6 consecutive transmembrane segments (helical) span residues 11 to 31 (LMQM…LMKL), 104 to 124 (LLIS…LGII), 139 to 159 (VIST…LLFI), 170 to 190 (ILSQ…AYII), 229 to 249 (ILPI…GTVV), and 279 to 299 (VLFI…LTLL). The ABC transmembrane type-1 domain maps to 100–297 (APITLLISFS…IINTIADLLT (198 aa)).

The protein belongs to the binding-protein-dependent transport system permease family. OppBC subfamily. In terms of assembly, the complex is composed of two ATP-binding proteins (NikD and NikE), two transmembrane proteins (NikB and NikC) and a solute-binding protein (NikA).

It is found in the cell membrane. Part of the ABC transporter complex NikABCDE (Opp2) involved in nickel import. Probably responsible for the translocation of the substrate across the membrane. The sequence is that of Nickel import system permease protein NikB from Staphylococcus aureus (strain USA300).